The sequence spans 136 residues: Cytidine deaminase (136 aa).

Residues 1–128 (MNRQELITEA…ELLPGAFSSE (128 aa)) form the CMP/dCMP-type deaminase domain. 42-44 (NIE) is a substrate binding site. Cys53 serves as a coordination point for Zn(2+). Glu55 serves as the catalytic Proton donor. Zn(2+)-binding residues include Cys86 and Cys89.

It belongs to the cytidine and deoxycytidylate deaminase family. Homotetramer. The cofactor is Zn(2+).

It carries out the reaction cytidine + H2O + H(+) = uridine + NH4(+). It catalyses the reaction 2'-deoxycytidine + H2O + H(+) = 2'-deoxyuridine + NH4(+). Its function is as follows. This enzyme scavenges exogenous and endogenous cytidine and 2'-deoxycytidine for UMP synthesis. This Bacillus subtilis (strain 168) protein is Cytidine deaminase (cdd).